Consider the following 265-residue polypeptide: Phosphatidylglycerol--prolipoprotein diacylglyceryl transferase (265 aa).

7 helical membrane passes run 17-37, 57-77, 89-109, 127-147, 176-196, 201-218, and 233-253; these read VAVR…VVLG, LLLY…VLFY, ILAV…VLVA, FIAP…FING, QLYQ…VFAA, LRAV…LRFV, and LVPG…VGLA. Residue arginine 140 coordinates a 1,2-diacyl-sn-glycero-3-phospho-(1'-sn-glycerol).

The protein belongs to the Lgt family.

It is found in the cell inner membrane. It carries out the reaction L-cysteinyl-[prolipoprotein] + a 1,2-diacyl-sn-glycero-3-phospho-(1'-sn-glycerol) = an S-1,2-diacyl-sn-glyceryl-L-cysteinyl-[prolipoprotein] + sn-glycerol 1-phosphate + H(+). Its pathway is protein modification; lipoprotein biosynthesis (diacylglyceryl transfer). Its function is as follows. Catalyzes the transfer of the diacylglyceryl group from phosphatidylglycerol to the sulfhydryl group of the N-terminal cysteine of a prolipoprotein, the first step in the formation of mature lipoproteins. This Azoarcus sp. (strain BH72) protein is Phosphatidylglycerol--prolipoprotein diacylglyceryl transferase.